A 321-amino-acid chain; its full sequence is Small ribosomal subunit biogenesis GTPase RsgA (321 aa).

In terms of domain architecture, CP-type G spans 89-248; sequence QSWINRPPVA…VADTPGFNRP (160 aa). GTP-binding positions include 138–141 and 190–198; these read TKRD and GPSGVGKTS. Cys273, Cys278, His280, and Cys286 together coordinate Zn(2+).

This sequence belongs to the TRAFAC class YlqF/YawG GTPase family. RsgA subfamily. As to quaternary structure, monomer. Associates with 30S ribosomal subunit, binds 16S rRNA. It depends on Zn(2+) as a cofactor.

It is found in the cytoplasm. Functionally, one of several proteins that assist in the late maturation steps of the functional core of the 30S ribosomal subunit. Helps release RbfA from mature subunits. May play a role in the assembly of ribosomal proteins into the subunit. Circularly permuted GTPase that catalyzes slow GTP hydrolysis, GTPase activity is stimulated by the 30S ribosomal subunit. This chain is Small ribosomal subunit biogenesis GTPase RsgA, found in Prochlorococcus marinus (strain MIT 9303).